Consider the following 526-residue polypeptide: GMP synthase [glutamine-hydrolyzing] (526 aa).

The 200-residue stretch at 9–208 (RILILDFGSQ…VKDICGCECL (200 aa)) folds into the Glutamine amidotransferase type-1 domain. Cysteine 86 acts as the Nucleophile in catalysis. Catalysis depends on residues histidine 182 and glutamate 184. One can recognise a GMPS ATP-PPase domain in the interval 209-401 (WTPATIIDDA…LGLPYDMLYR (193 aa)). 236 to 242 (SGGVDSS) contributes to the ATP binding site.

In terms of assembly, homodimer.

The enzyme catalyses XMP + L-glutamine + ATP + H2O = GMP + L-glutamate + AMP + diphosphate + 2 H(+). It functions in the pathway purine metabolism; GMP biosynthesis; GMP from XMP (L-Gln route): step 1/1. Functionally, catalyzes the synthesis of GMP from XMP. The polypeptide is GMP synthase [glutamine-hydrolyzing] (Aeromonas salmonicida (strain A449)).